The chain runs to 326 residues: tRNA dimethylallyltransferase (326 aa).

10–17 lines the ATP pocket; the sequence is GPTGTGKT. Residue 12–17 participates in substrate binding; it reads TGTGKT. The interval 35–38 is interaction with substrate tRNA; sequence DSMQ.

It belongs to the IPP transferase family. As to quaternary structure, monomer. Mg(2+) is required as a cofactor.

The enzyme catalyses adenosine(37) in tRNA + dimethylallyl diphosphate = N(6)-dimethylallyladenosine(37) in tRNA + diphosphate. Functionally, catalyzes the transfer of a dimethylallyl group onto the adenine at position 37 in tRNAs that read codons beginning with uridine, leading to the formation of N6-(dimethylallyl)adenosine (i(6)A). This is tRNA dimethylallyltransferase from Dictyoglomus turgidum (strain DSM 6724 / Z-1310).